The chain runs to 181 residues: Keratin-associated protein 4-5 (181 aa).

26 repeat units span residues 5 to 9 (CCGSV), 20 to 24 (CCRPS), 25 to 29 (CCQTT), 30 to 34 (CCRTT), 35 to 39 (CCRPS), 40 to 44 (CCKPQ), 45 to 49 (CCQSV), 55 to 59 (CCHPS), 60 to 64 (CCISS), 65 to 69 (CCRPY), 70 to 74 (CCESS), 75 to 79 (CCRPC), 80 to 84 (CCQTT), 85 to 89 (CCRTT), 90 to 94 (CCRTT), 95 to 99 (CCCPS), 100 to 104 (CCVSS), 105 to 109 (CCRPQ), 110 to 114 (CCQSV), 115 to 119 (CCQPT), 120 to 124 (CCRPS), 125 to 129 (CCISS), 130 to 134 (CCHPS), 135 to 139 (CCESS), 140 to 144 (CCRPC), and 145 to 149 (CCVRP). Positions 5–154 (CCGSVSSEQS…CCVRPVCGRV (150 aa)) are 26 X 5 AA repeats of C-C-[GRQVCHIEK]-[SPTR]-[VSTQYC].

The protein belongs to the KRTAP type 4 family. As to quaternary structure, interacts with hair keratins. In terms of tissue distribution, expressed in the hair follicles.

Its function is as follows. In the hair cortex, hair keratin intermediate filaments are embedded in an interfilamentous matrix, consisting of hair keratin-associated proteins (KRTAP), which are essential for the formation of a rigid and resistant hair shaft through their extensive disulfide bond cross-linking with abundant cysteine residues of hair keratins. The matrix proteins include the high-sulfur and high-glycine-tyrosine keratins. This chain is Keratin-associated protein 4-5 (KRTAP4-5), found in Homo sapiens (Human).